The sequence spans 237 residues: MSVISMKQLLEAGVHFGHQTRRWNPKMAKYIFTERNGIYIIDLQKTVKKVEEAYKFTKEVAETGKPILFVGTKKQAQDAIKDEAERCGMYFVNERWLGGMLTNHKTIKTRINKLRELEKMEEEGVFNVLPKKEVIKLRAEKEKLEKYLGGIKDMPELPGAMFVVDPRKENIAIQEAHRLGIPVVGIVDTNCDPEQLDFAIPGNDDAIRAVKLITGAMATAVIEGRQGAEEEVAEDQE.

This sequence belongs to the universal ribosomal protein uS2 family.

In Clostridioides difficile (strain 630) (Peptoclostridium difficile), this protein is Small ribosomal subunit protein uS2.